A 60-amino-acid polypeptide reads, in one-letter code: Large ribosomal subunit protein uL30 (60 aa).

Belongs to the universal ribosomal protein uL30 family. As to quaternary structure, part of the 50S ribosomal subunit.

The chain is Large ribosomal subunit protein uL30 from Christiangramia forsetii (strain DSM 17595 / CGMCC 1.15422 / KT0803) (Gramella forsetii).